The chain runs to 169 residues: Steroid receptor-associated and regulated protein (169 aa).

In terms of assembly, interacts with 14-3-3 proteins. In terms of tissue distribution, expressed in breast tumors with a higher expression level in estrogen receptor-positive cancers.

May regulate the transcriptional function of androgen and estrogen receptors. This is Steroid receptor-associated and regulated protein from Homo sapiens (Human).